Here is a 317-residue protein sequence, read N- to C-terminus: Transaldolase (317 aa).

Lys-132 functions as the Schiff-base intermediate with substrate in the catalytic mechanism.

Belongs to the transaldolase family. Type 1 subfamily. As to quaternary structure, homodimer.

Its subcellular location is the cytoplasm. It catalyses the reaction D-sedoheptulose 7-phosphate + D-glyceraldehyde 3-phosphate = D-erythrose 4-phosphate + beta-D-fructose 6-phosphate. It participates in carbohydrate degradation; pentose phosphate pathway; D-glyceraldehyde 3-phosphate and beta-D-fructose 6-phosphate from D-ribose 5-phosphate and D-xylulose 5-phosphate (non-oxidative stage): step 2/3. Functionally, transaldolase is important for the balance of metabolites in the pentose-phosphate pathway. The chain is Transaldolase from Pseudoalteromonas atlantica (strain T6c / ATCC BAA-1087).